The primary structure comprises 314 residues: Malate dehydrogenase (314 aa).

NAD(+)-binding positions include 11-16 (GSGNIG) and Asp35. Residues Arg84 and Arg90 each coordinate substrate. NAD(+)-binding positions include Asn97 and 120-122 (ITN). 2 residues coordinate substrate: Asn122 and Arg153. His177 serves as the catalytic Proton acceptor.

Belongs to the LDH/MDH superfamily. MDH type 3 family.

It catalyses the reaction (S)-malate + NAD(+) = oxaloacetate + NADH + H(+). Catalyzes the reversible oxidation of malate to oxaloacetate. This is Malate dehydrogenase from Rickettsia rickettsii (strain Iowa).